A 288-amino-acid chain; its full sequence is Aquaporin PIP 1-3 (288 aa).

The tract at residues methionine 1–glutamate 30 is disordered. 2 helical membrane-spanning segments follow: residues isoleucine 57 to valine 77 and isoleucine 92 to histidine 114. The NPA 1 signature appears at asparagine 116–alanine 118. 3 helical membrane passes run valine 135 to phenylalanine 155, glycine 177 to alanine 197, and isoleucine 211 to isoleucine 231. Positions asparagine 237–alanine 239 match the NPA 2 motif. Residues isoleucine 259–isoleucine 279 form a helical membrane-spanning segment.

This sequence belongs to the MIP/aquaporin (TC 1.A.8) family. PIP (TC 1.A.8.11) subfamily. As to expression, expressed in roots and leaves.

Its subcellular location is the cell membrane. Water channel required to facilitate the transport of water across cell membrane. Increases the capacity for root water uptake under water deficit. May play a role in drought avoidance in upland rice. The chain is Aquaporin PIP 1-3 (PIP1-3) from Oryza sativa subsp. japonica (Rice).